We begin with the raw amino-acid sequence, 114 residues long: Iron-sulfur cluster insertion protein ErpA (114 aa).

Positions 42, 106, and 108 each coordinate iron-sulfur cluster.

Belongs to the HesB/IscA family. Homodimer. It depends on iron-sulfur cluster as a cofactor.

Its function is as follows. Required for insertion of 4Fe-4S clusters for at least IspG. The protein is Iron-sulfur cluster insertion protein ErpA of Hamiltonella defensa subsp. Acyrthosiphon pisum (strain 5AT).